A 370-amino-acid polypeptide reads, in one-letter code: 4-hydroxy-3-methylbut-2-en-1-yl diphosphate synthase (flavodoxin) (370 aa).

4 residues coordinate [4Fe-4S] cluster: cysteine 265, cysteine 268, cysteine 300, and glutamate 307.

The protein belongs to the IspG family. The cofactor is [4Fe-4S] cluster.

It catalyses the reaction (2E)-4-hydroxy-3-methylbut-2-enyl diphosphate + oxidized [flavodoxin] + H2O + 2 H(+) = 2-C-methyl-D-erythritol 2,4-cyclic diphosphate + reduced [flavodoxin]. It functions in the pathway isoprenoid biosynthesis; isopentenyl diphosphate biosynthesis via DXP pathway; isopentenyl diphosphate from 1-deoxy-D-xylulose 5-phosphate: step 5/6. In terms of biological role, converts 2C-methyl-D-erythritol 2,4-cyclodiphosphate (ME-2,4cPP) into 1-hydroxy-2-methyl-2-(E)-butenyl 4-diphosphate. The chain is 4-hydroxy-3-methylbut-2-en-1-yl diphosphate synthase (flavodoxin) from Symbiobacterium thermophilum (strain DSM 24528 / JCM 14929 / IAM 14863 / T).